Reading from the N-terminus, the 429-residue chain is Gap junction gamma-2 protein (429 aa).

Residues 1–25 (MTNMSWSFLTRLLEEIHNHSTFVGK) lie on the Cytoplasmic side of the membrane. Residues 26–46 (VWLTVLVVFRIVLTAVGGESI) form a helical membrane-spanning segment. Over 47-78 (YSDEQTKFTCNTRQPGCDNVCYDAFAPLSHVR) the chain is Extracellular. The chain crosses the membrane as a helical span at residues 79-99 (FWVFQIVVISTPSVMYLGYAV). Over 100–214 (HRLARASQDE…EGLMRVYVAQ (115 aa)) the chain is Cytoplasmic. Positions 106-200 (SQDERRRASR…GPAGQHDGRR (95 aa)) are disordered. Residues 112–123 (RASRRRPSRRAP) are compositionally biased toward basic residues. Positions 124-138 (RPPLPLPPPPHPGWP) are enriched in pro residues. Acidic residues predominate over residues 142–173 (DLGEEEPMLGLGEEDEDPGVAEGLGEDEEAED). A helical transmembrane segment spans residues 215–235 (LVARAAFEVAFLVGQYLLYGF). The Extracellular portion of the chain corresponds to 236–263 (EVRPFFACSRQPCPHVVDCFVSRPTEKT). Residues 264–284 (VFLLVMYVVSCLCLLLNLCEM) traverse the membrane as a helical segment. Over 285-429 (AHLGLGNAQD…SREGKTTVWI (145 aa)) the chain is Cytoplasmic. 2 disordered regions span residues 296–316 (VRGR…PPCA) and 361–429 (LGDL…TVWI). The span at 303–316 (PASPGPMPRPPPCA) shows a compositional bias: pro residues. Ser366 carries the post-translational modification Phosphoserine. Positions 372-395 (LPANARGPPKPGAPASGSGSATSG) are enriched in low complexity.

Belongs to the connexin family. Gamma-type subfamily. In terms of assembly, a connexon is composed of a hexamer of connexins. Interacts with TJP1.

It is found in the cell membrane. Its subcellular location is the cell junction. It localises to the gap junction. Its function is as follows. One gap junction consists of a cluster of closely packed pairs of transmembrane channels, the connexons, through which materials of low MW diffuse from one cell to a neighboring cell. May play a role in myelination in central and peripheral nervous systems. The sequence is that of Gap junction gamma-2 protein (GJC2) from Bos taurus (Bovine).